The primary structure comprises 140 residues: Austinoid biosynthesis clusters protein S (140 aa).

The protein belongs to the trt14 isomerase family. In terms of assembly, homodimer.

The protein operates within secondary metabolite biosynthesis; terpenoid biosynthesis. Its function is as follows. Part of the gene cluster B that mediates the biosynthesis of austinol and dehydroaustinol, two fungal meroterpenoids. The first step of the pathway is the synthesis of 3,5-dimethylorsellinic acid by the polyketide synthase ausA. 3,5-dimethylorsellinic acid is then prenylated by the polyprenyl transferase ausN. Further epoxidation by the FAD-dependent monooxygenase ausM and cyclization by the probable terpene cyclase ausL lead to the formation of protoaustinoid A. Protoaustinoid A is then oxidized to spiro-lactone preaustinoid A3 by the combined action of the FAD-binding monooxygenases ausB and ausC, and the dioxygenase ausE. Acid-catalyzed keto-rearrangement and ring contraction of the tetraketide portion of preaustinoid A3 by ausJ lead to the formation of preaustinoid A4. The aldo-keto reductase ausK, with the help of ausH, is involved in the next step by transforming preaustinoid A4 into isoaustinone which is in turn hydroxylated by the P450 monooxygenase ausI to form austinolide. Finally, the cytochrome P450 monooxygenase ausG modifies austinolide to austinol. Austinol can be further modified to dehydroaustinol which forms a diffusible complex with diorcinol that initiates conidiation. Due to genetic rearrangements of the clusters and the subsequent loss of some enzymes, the end products of the Emericella nidulans austinoid biosynthesis clusters are austinol and dehydroaustinol, even if additional enzymes, such as the O-acetyltransferase ausQ and the cytochrome P450 monooxygenase ausR are still functional. AusS is necessary for austinoids production and may play a possible function as a regulator. This chain is Austinoid biosynthesis clusters protein S, found in Emericella nidulans (strain FGSC A4 / ATCC 38163 / CBS 112.46 / NRRL 194 / M139) (Aspergillus nidulans).